The following is a 407-amino-acid chain: MKRAFIMVLDSFGIGATEDAERFGDVGADTLGHIAEACAKGEADNGRKGPLNLPNLTRLGLAKAHEGSTGFIPAGMDGNAEVIGAYAWAHEMSSGKDTPSGHWEIAGVPVLFEWGYFSDHENSFPQELLDKLVERANLPGYLGNCHSSGTVILDQLGEEHMKTGKPIFYTSADSVFQIACHEETFGLDKLYELCEIAREELTNGGYNIGRVIARPFIGDKAGNFQRTGNRHDLAVEPPAPTVLQKLVDEKHGQVVSVGKIADIYANCGITKKVKATGLDALFDATIKEMKEAGDNTIVFTNFVDFDSSWGHRRDVAGYAAGLELFDRRLPELMSLLRDDDILILTADHGCDPTWTGTDHTREHIPVLVYGPKVKPGSLGHRETFADIGQTLAKYFGTSDMEYGKAMF.

6 residues coordinate Mn(2+): Asp-10, Asp-306, His-311, Asp-347, His-348, and His-359.

It belongs to the phosphopentomutase family. Mn(2+) serves as cofactor.

Its subcellular location is the cytoplasm. It carries out the reaction 2-deoxy-alpha-D-ribose 1-phosphate = 2-deoxy-D-ribose 5-phosphate. It catalyses the reaction alpha-D-ribose 1-phosphate = D-ribose 5-phosphate. Its pathway is carbohydrate degradation; 2-deoxy-D-ribose 1-phosphate degradation; D-glyceraldehyde 3-phosphate and acetaldehyde from 2-deoxy-alpha-D-ribose 1-phosphate: step 1/2. Functionally, isomerase that catalyzes the conversion of deoxy-ribose 1-phosphate (dRib-1-P) and ribose 1-phosphate (Rib-1-P) to deoxy-ribose 5-phosphate (dRib-5-P) and ribose 5-phosphate (Rib-5-P), respectively. This Shigella boydii serotype 18 (strain CDC 3083-94 / BS512) protein is Phosphopentomutase.